Reading from the N-terminus, the 395-residue chain is Cyclomarin C epoxidase CymV (395 aa).

Belongs to the cytochrome P450 family.

In terms of biological role, cytochrome P450; part of the gene cluster that mediates the biosynthesis of cyclic heptapeptides, known as cyclomarins and also of cyclic dipeptides, called cyclomarazines, which have both antimicrobial and cytotoxic effects. First, CymD catalyzes the reverse N-prenylation of monomeric L-tryptophan with dimethylallyl diphosphate (DMAPP) to form N-(1,1-dimethylallyl)-tryptophan (r-N-DMAT). The N-(1,1-dimethylallyl)-tryptophan produced by CymD is then combined with a range of standard and nonproteinogenic amino acid substrates to synthesize the peptides, a process that is probably catalyzed by the non-canonical nonribosomal peptide synthetase (NRPS), CymA. Other proteins in the cluster catalyze further modifications of the peptides including CymV which catalyzes the oxidation of olefinic cyclomarins and cyclomarazines to their respective epoxide derivatives. This chain is Cyclomarin C epoxidase CymV, found in Salinispora arenicola (strain CNS-205).